The primary structure comprises 279 residues: MTQFDKQYNSIIKEIIKNGISDEEFDVRTKWESDGTPAHTLSIITKQMRFDNSEVPILTTKKVAWKTAIKELLWIWQLKSNDVTELNKMGVHIWDQWKQEDGSIGHAYGFQLAKKNRNLNGEKVDQVDYLLHQLKNNPSSRRHITMLWNPDELDSMALTPCVYETQWYVKQGKLHLEVRARSNDMALGNPFNVFQYNVLQRMIAQVTGYELGEYIFNIGDCHVYTRHIDNLKIQMEREQFEAPKLWINPEVKDFYDFTIDDFKLINYKHGDRLSFEVAV.

Position 141-142 (141-142 (RR)) interacts with dUMP. C161 functions as the Nucleophile in the catalytic mechanism. DUMP is bound by residues 181–184 (RSND), N192, and 222–224 (HVY). D184 is a (6R)-5,10-methylene-5,6,7,8-tetrahydrofolate binding site. A278 provides a ligand contact to (6R)-5,10-methylene-5,6,7,8-tetrahydrofolate.

Belongs to the thymidylate synthase family. Bacterial-type ThyA subfamily. As to quaternary structure, homodimer.

It is found in the cytoplasm. It catalyses the reaction dUMP + (6R)-5,10-methylene-5,6,7,8-tetrahydrofolate = 7,8-dihydrofolate + dTMP. It functions in the pathway pyrimidine metabolism; dTTP biosynthesis. In terms of biological role, catalyzes the reductive methylation of 2'-deoxyuridine-5'-monophosphate (dUMP) to 2'-deoxythymidine-5'-monophosphate (dTMP) while utilizing 5,10-methylenetetrahydrofolate (mTHF) as the methyl donor and reductant in the reaction, yielding dihydrofolate (DHF) as a by-product. This enzymatic reaction provides an intracellular de novo source of dTMP, an essential precursor for DNA biosynthesis. This Bacillus mojavensis protein is Thymidylate synthase.